We begin with the raw amino-acid sequence, 344 residues long: Glutamine synthetase (344 aa).

A GS beta-grasp domain is found at Tyr4 to Gly86. Residues Pro89–Ala344 enclose the GS catalytic domain. 2 residues coordinate Mg(2+): Glu109 and Glu111. Glu167 provides a ligand contact to ATP. Residues Glu172 and Glu179 each contribute to the Mg(2+) site. Glu278 contacts L-glutamate.

It belongs to the glutamine synthetase family. Homooctamer and homotetramer. Requires Mg(2+) as cofactor.

It is found in the cytoplasm. It carries out the reaction L-glutamate + NH4(+) + ATP = L-glutamine + ADP + phosphate + H(+). In terms of biological role, catalyzes the ATP-dependent biosynthesis of glutamine from glutamate and ammonia. This chain is Glutamine synthetase, found in Bradyrhizobium diazoefficiens (strain JCM 10833 / BCRC 13528 / IAM 13628 / NBRC 14792 / USDA 110).